Here is a 1520-residue protein sequence, read N- to C-terminus: MTYNQMPKAQGLYRPEFEHDACGIGLYAHLKGKQTHDIVKQGLKMLCQLDHRGGQGSDPDTGDGAGLLVQIPDAFFRKECKNINLPEKERYGVGMVFFSQKEDERKKIEKQINALIEQEGQVVLGWRTVPVNVGKIGTVAQKSCPFVRQVFIGASSDLKDNLSFERKLYVIRKQAENWGVTEGLDFYFASLSSQTIVYKGLLTPEQVDAFYSDLQDEAFVSAFALVHSRFSTNTFPTWERAHPNRYLVHNGEINTLRGNINWMRAREQQFVSESFGEDLNKILPILNADGSDSSILDNAFEFFVMAGRKPAHTAMMLIPEPWTENTHMSKEKRAFYEYHSSLMEPWDGPTAISFTDGKQIGAILDRNGLRPARYYVTKDDYIIFSSEVGVIEVEQENVLYKNRLEPGKMLLIDLEEGRIISDEEVKTQIATEYPYQKWLEEELVQVNPDPESREEEQFSDLLTRQKAFGYTYEDIQKYLIPVIKEGKDPLGSMGNDAPLAVLSDRAQSLFNYFKQLFAQVTNPPIDAIREQLVTSTMTWLGAEGDLLHPSERNVRRIKLYTPVLSNEQFYALKTIVHPDLKSQKIDVLFSEDLERGLKDMFTQAEKAISQGVSLLILSDKKMNERLTPIPPLLAVSALHQHLIRKGLRTKVSIIVESGEAREVHHFAALIGYGADAINPYLAYATYKQEIDEGRLDISYEEAVSKYGKSITEGVVKVMSKMGISTVQSYRGAQIFEAVGISRDVIDRYFSGTASQLGGIDLQTIAEEAQRRHREAYQDDYSKTLEPGSDFQWRNGGEHHAFNPKTIHTLQWACRRNDYNLFKQYTKAADEERIGFLRNLFAFDGNRKPLKLEEVESAESIVKRFKTGAMSFGSLSKEAHEALAIAMNRLGGKSNSGEGGEDPKRFVPDENGDDRRSAIKQIASGRFGVKSHYLVNADELQIKMAQGAKPGEGGQLPGNKVYPWVADVRGSTPGVGLISPPPHHDIYSIEDLAQLIHDLKNANRDARISVKLVSKAGVGTIAAGVAKATADVIVISGYDGGTGASPKTSIKHTGLPWELGLAEAHQTLMLNGLRDRVVLETDGKLMTGRDVVMAALLGAEEFGFATAPLVVLGCVMMRACHLDTCPVGVATQNPELRKKFMGDPDHIVNYMLFIAEEVREYMAALGFKTFDEMIGRTDVLHASERAKEHWKASQLDLSTLLYQPEGVRTFQSPQNHKIDQSLDITTILPAVQEAIESGKEADISIEINNTNRVAGTITGSEISKRYGEEGLPEDTIKLHFTGSAGQSFGAFVPKGMTLYLDGDSNDYVGKGLSGGKIIVKSSEGFNSASDDNVIIGNVAFYGATSGEAYINGRAGERFAVRNSGVNVVVEGIGDHGCEYMTGGSVVVLGDVGKNFAAGMSGGIAYVLTEDVKAFKRKCNLEMILFESLEDEKEIQQIKAMLERHTAYTNSQKAEDLLDQWEDSVKKFVKVIPKNYKQMLASIEEQKAAGLSDEEAIMFAFEANTKPKQNTAASGQKQAVVQ.

The For GATase activity role is filled by Cys-22. One can recognise a Glutamine amidotransferase type-2 domain in the interval 22–415 (CGIGLYAHLK…PGKMLLIDLE (394 aa)). The disordered stretch occupies residues 890–913 (GGKSNSGEGGEDPKRFVPDENGDD). The segment covering 900–913 (EDPKRFVPDENGDD) has biased composition (basic and acidic residues). 1060-1112 (LAEAHQTLMLNGLRDRVVLETDGKLMTGRDVVMAALLGAEEFGFATAPLVVLG) lines the FMN pocket. The [3Fe-4S] cluster site is built by Cys-1113, Cys-1119, and Cys-1124.

Belongs to the glutamate synthase family. As to quaternary structure, aggregate of 4 catalytic active heterodimers, consisting of a large and a small subunit. Requires [3Fe-4S] cluster as cofactor. FAD serves as cofactor. It depends on FMN as a cofactor.

The catalysed reaction is 2 L-glutamate + NADP(+) = L-glutamine + 2-oxoglutarate + NADPH + H(+). It functions in the pathway amino-acid biosynthesis; L-glutamate biosynthesis via GLT pathway; L-glutamate from 2-oxoglutarate and L-glutamine (NADP(+) route): step 1/1. The protein operates within energy metabolism; nitrogen metabolism. In Bacillus subtilis (strain 168), this protein is Glutamate synthase [NADPH] large chain (gltA).